We begin with the raw amino-acid sequence, 284 residues long: MEMO1 family protein Mevan_0697 (284 aa).

This sequence belongs to the MEMO1 family.

The sequence is that of MEMO1 family protein Mevan_0697 from Methanococcus vannielii (strain ATCC 35089 / DSM 1224 / JCM 13029 / OCM 148 / SB).